A 213-amino-acid chain; its full sequence is Calcineurin B-like protein 8 (213 aa).

Gly2 carries the N-myristoyl glycine lipid modification. EF-hand domains lie at 31–66, 67–102, 104–139, and 148–183; these read EVEALFELFKKISHSIFRDGLIHKEEFQLALFRNSN, KKNLFANRIFDLFDLKRNGVIDFGEFVRSLSIFHPE, PLGDKIAFAFRLYDLRGTGCIEREELHEMVLALLNE, and AVEQIVDQTFKQADLNDDGKIDPDEWKTFASKNPAL. Positions 161, 163, 165, 167, and 172 each coordinate Ca(2+).

It belongs to the calcineurin regulatory subunit family. As to quaternary structure, homodimer. Expressed at low levels in roots, shoots, culms, leaves and young spikelets.

The protein resides in the cell membrane. Functionally, acts as a calcium sensor. May function as positive regulator of salt stress responses. CBL proteins interact with CIPK serine-threonine protein kinases. Binding of a CBL protein to the regulatory NAF domain of a CIPK protein lead to the activation of the kinase in a calcium-dependent manner. The polypeptide is Calcineurin B-like protein 8 (CBL8) (Oryza sativa subsp. japonica (Rice)).